A 360-amino-acid polypeptide reads, in one-letter code: Protein Wnt-2 (360 aa).

Positions 1–25 (MNAPLGGIWLWLPLLLTWLSPEVSS) are cleaved as a signal peptide. Intrachain disulfides connect cysteine 76/cysteine 87, cysteine 127/cysteine 135, cysteine 137/cysteine 157, cysteine 206/cysteine 220, cysteine 208/cysteine 215, cysteine 278/cysteine 309, cysteine 294/cysteine 304, cysteine 308/cysteine 348, cysteine 324/cysteine 339, cysteine 326/cysteine 336, and cysteine 331/cysteine 332. The O-palmitoleoyl serine; by PORCN moiety is linked to residue serine 212. N-linked (GlcNAc...) asparagine glycosylation is present at asparagine 295.

The protein belongs to the Wnt family. In terms of processing, palmitoleoylation is required for efficient binding to frizzled receptors. Depalmitoleoylation leads to Wnt signaling pathway inhibition.

It localises to the secreted. The protein localises to the extracellular space. Its subcellular location is the extracellular matrix. Functionally, ligand for members of the frizzled family of seven transmembrane receptors. Probable developmental protein. May be a signaling molecule which affects the development of discrete regions of tissues. Is likely to signal over only few cell diameters. This Carollia perspicillata (Seba's short-tailed bat) protein is Protein Wnt-2 (WNT2).